The sequence spans 404 residues: Dual-specificity RNA methyltransferase RlmN (404 aa).

E118 acts as the Proton acceptor in catalysis. The Radical SAM core domain occupies 125-357 (VGRAGALCVS…NKAGYSSPIR (233 aa)). The cysteines at positions 132 and 368 are disulfide-linked. Residues C139, C143, and C146 each contribute to the [4Fe-4S] cluster site. Residues 194-195 (GE), S226, 248-250 (SLH), and N325 contribute to the S-adenosyl-L-methionine site. The S-methylcysteine intermediate role is filled by C368.

It belongs to the radical SAM superfamily. RlmN family. [4Fe-4S] cluster serves as cofactor.

It is found in the cytoplasm. It catalyses the reaction adenosine(2503) in 23S rRNA + 2 reduced [2Fe-2S]-[ferredoxin] + 2 S-adenosyl-L-methionine = 2-methyladenosine(2503) in 23S rRNA + 5'-deoxyadenosine + L-methionine + 2 oxidized [2Fe-2S]-[ferredoxin] + S-adenosyl-L-homocysteine. The catalysed reaction is adenosine(37) in tRNA + 2 reduced [2Fe-2S]-[ferredoxin] + 2 S-adenosyl-L-methionine = 2-methyladenosine(37) in tRNA + 5'-deoxyadenosine + L-methionine + 2 oxidized [2Fe-2S]-[ferredoxin] + S-adenosyl-L-homocysteine. Its function is as follows. Specifically methylates position 2 of adenine 2503 in 23S rRNA and position 2 of adenine 37 in tRNAs. m2A2503 modification seems to play a crucial role in the proofreading step occurring at the peptidyl transferase center and thus would serve to optimize ribosomal fidelity. The protein is Dual-specificity RNA methyltransferase RlmN of Caulobacter vibrioides (strain ATCC 19089 / CIP 103742 / CB 15) (Caulobacter crescentus).